Here is a 342-residue protein sequence, read N- to C-terminus: Replication factor C subunit 3 (342 aa).

63 to 70 (GPPGTGKT) contributes to the ATP binding site.

Belongs to the activator 1 small subunits family. Heteropentamer of subunits rfc1, rfc2, rfc3, rfc4 and rfc5 that forms a complex (RFC) with PCNA in the presence of ATP. Two other complexes exist where rfc1 can be replaced by either ctf18 or elg1 to form the ctf18-RFC or the elg1-RFC complexes respectively.

It localises to the nucleus. Functionally, the elongation of primed DNA templates by DNA polymerase delta and epsilon requires the action of the accessory proteins PCNA and activator 1. Subunit 3 binds ATP. Also involved in replication and DNA damage checkpoint controls, probably functioning as a checkpoint sensor. This Schizosaccharomyces pombe (strain 972 / ATCC 24843) (Fission yeast) protein is Replication factor C subunit 3 (rfc3).